The sequence spans 219 residues: ATP synthase subunit a (219 aa).

6 consecutive transmembrane segments (helical) span residues 16 to 36 (LSNWLSMLIPLLFMVMSFWLI), 57 to 79 (LLMGPASFGANILVIALFLFILF), 96 to 116 (LAVTLSLAVPLWISFILYTWI), 122 to 142 (ALAHLVPLGTPAPLMPFMVLM), 158 to 178 (LAANMIAGHLLLTLLGAQGTL), and 184 to 204 (TSIVVFSQIILLMLEFSVAII).

The protein belongs to the ATPase A chain family. As to quaternary structure, F-type ATPases have 2 components, CF(1) - the catalytic core - and CF(0) - the membrane proton channel. CF(1) has five subunits: alpha(3), beta(3), gamma(1), delta(1), epsilon(1). CF(0) has three main subunits: a, b and c.

The protein resides in the mitochondrion inner membrane. Functionally, mitochondrial membrane ATP synthase (F(1)F(0) ATP synthase or Complex V) produces ATP from ADP in the presence of a proton gradient across the membrane which is generated by electron transport complexes of the respiratory chain. F-type ATPases consist of two structural domains, F(1) - containing the extramembraneous catalytic core and F(0) - containing the membrane proton channel, linked together by a central stalk and a peripheral stalk. During catalysis, ATP synthesis in the catalytic domain of F(1) is coupled via a rotary mechanism of the central stalk subunits to proton translocation. Key component of the proton channel; it may play a direct role in the translocation of protons across the membrane. The chain is ATP synthase subunit a (ATP6) from Artemia franciscana (Brine shrimp).